We begin with the raw amino-acid sequence, 595 residues long: Tectonic-3 (595 aa).

A signal peptide spans 1–22; the sequence is MCTLQLHLLLLVVLMLSETARP. Residues 23 to 62 form a disordered region; sequence QPSSTARAFPTSWGLEPVTPEVPTSAPPDSSESPTPWTLS. The Extracellular portion of the chain corresponds to 23–575; that stretch reads QPSSTARAFP…ALSRGASVQK (553 aa). Residues 49 to 62 show a composition bias toward polar residues; it reads PPDSSESPTPWTLS. 2 N-linked (GlcNAc...) asparagine glycosylation sites follow: asparagine 167 and asparagine 336. The helical transmembrane segment at 576 to 594 threads the bilayer; the sequence is DSLVLILCVLLLGLLNSQT. Residue lysine 595 is a topological domain, cytoplasmic.

This sequence belongs to the tectonic family. As to quaternary structure, part of the tectonic-like complex (also named B9 complex).

It is found in the membrane. Its function is as follows. Part of the tectonic-like complex which is required for tissue-specific ciliogenesis and may regulate ciliary membrane composition. May be involved in apoptosis regulation. Necessary for signal transduction through the sonic hedgehog (Shh) signaling pathway. The chain is Tectonic-3 (Tctn3) from Mus musculus (Mouse).